Consider the following 1264-residue polypeptide: Ubiquitin carboxyl-terminal hydrolase usp-48 (1264 aa).

One can recognise a USP domain in the interval 108 to 430; it reads AGLINGGNFC…ACYGLLYRRR (323 aa). The active-site Nucleophile is C117. The active-site Proton acceptor is H366. Disordered regions lie at residues 390–415, 522–610, and 630–679; these read IPKP…KEKY, AKGE…IMDT, and TVEV…PVSS. Basic and acidic residues-rich tracts occupy residues 403–415 and 532–543; these read KTEK…KEKY and EASENEEKKKNE. The stretch at 516-547 forms a coiled coil; it reads AQEYEVAKGEKKKKKKEASENEEKKKNEEDEA. Residues 565–575 show a composition bias toward low complexity; the sequence is SEPSTSAAATE. Composition is skewed to polar residues over residues 587–599 and 663–678; these read ETPN…STQV and NGTN…QPVS.

Belongs to the peptidase C19 family. As to expression, broadly expressed. Expressed in germline.

Its subcellular location is the nucleus. The protein resides in the chromosome. It catalyses the reaction Thiol-dependent hydrolysis of ester, thioester, amide, peptide and isopeptide bonds formed by the C-terminal Gly of ubiquitin (a 76-residue protein attached to proteins as an intracellular targeting signal).. Functionally, recognizes and hydrolyzes the peptide bond at the C-terminal Gly of ubiquitin. Involved in the processing of poly-ubiquitin precursors as well as that of ubiquitinated proteins. Required post-developmentally to restrict the plasticity of epidermal cells, probably by regulating gene expression. In Caenorhabditis elegans, this protein is Ubiquitin carboxyl-terminal hydrolase usp-48.